Reading from the N-terminus, the 601-residue chain is Elongation factor 4 (601 aa).

The tr-type G domain maps to 6–188 (QCIRNFSIIA…AVVAKVPPPQ (183 aa)). GTP-binding positions include 18-23 (DHGKST) and 135-138 (NKID).

This sequence belongs to the TRAFAC class translation factor GTPase superfamily. Classic translation factor GTPase family. LepA subfamily.

It is found in the cell membrane. The catalysed reaction is GTP + H2O = GDP + phosphate + H(+). Functionally, required for accurate and efficient protein synthesis under certain stress conditions. May act as a fidelity factor of the translation reaction, by catalyzing a one-codon backward translocation of tRNAs on improperly translocated ribosomes. Back-translocation proceeds from a post-translocation (POST) complex to a pre-translocation (PRE) complex, thus giving elongation factor G a second chance to translocate the tRNAs correctly. Binds to ribosomes in a GTP-dependent manner. The chain is Elongation factor 4 from Desulfitobacterium hafniense (strain DSM 10664 / DCB-2).